The primary structure comprises 316 residues: Membrane protein UL148 (316 aa).

The first 20 residues, 1–20 (MLRLLFTLVLLALYGPSVDA), serve as a signal peptide directing secretion. A helical membrane pass occupies residues 286 to 308 (FIVQYLNTLLITMMAAIWARVLI).

In terms of assembly, interacts with host SEL1L.

The protein localises to the host endoplasmic reticulum membrane. Its function is as follows. Chaperone protein that plays an important role in HCMV tropism. Cooperates with UL116 to regulate the abundance of gH-gL complexes in virion. Favors the incorporation of gL into virions once UL116 has regulated the early folding steps of virion assembly. Interacts with the host ERAD machinery and slows gO decay which would otherwise be constitutively degraded. Reorganizes the host endoplasmic reticulum and activates the unfolded protein response. Additionally, plays a role in the evasion of antiviral immune response by down-regulating cell surface expression of host CD58. Mechanistically, interacts with host CD58 and retains its immature form intracellularly. The capacity to cause endoplasmic reticulum reorganization and the intracellular retention of host CD58 are functionally independent properties. The sequence is that of Membrane protein UL148 (UL148) from Human cytomegalovirus (strain Merlin) (HHV-5).